The following is a 466-amino-acid chain: Asparagine--tRNA ligase (466 aa).

The protein belongs to the class-II aminoacyl-tRNA synthetase family. Homodimer.

The protein resides in the cytoplasm. The catalysed reaction is tRNA(Asn) + L-asparagine + ATP = L-asparaginyl-tRNA(Asn) + AMP + diphosphate + H(+). The polypeptide is Asparagine--tRNA ligase (Shewanella sp. (strain MR-7)).